Reading from the N-terminus, the 84-residue chain is Small ribosomal subunit protein bS20 (84 aa).

The protein belongs to the bacterial ribosomal protein bS20 family.

Functionally, binds directly to 16S ribosomal RNA. The sequence is that of Small ribosomal subunit protein bS20 from Bacteroides fragilis (strain ATCC 25285 / DSM 2151 / CCUG 4856 / JCM 11019 / LMG 10263 / NCTC 9343 / Onslow / VPI 2553 / EN-2).